Here is a 587-residue protein sequence, read N- to C-terminus: Aspartate--tRNA ligase (587 aa).

Glutamate 174 is a binding site for L-aspartate. The interval 198–201 is aspartate; that stretch reads QTFK. L-aspartate is bound at residue arginine 220. Residues 220–222 and glutamine 229 each bind ATP; that span reads RDE. L-aspartate is bound at residue histidine 447. Glutamate 481 is an ATP binding site. Arginine 488 contacts L-aspartate. 533–536 provides a ligand contact to ATP; sequence GLDR.

The protein belongs to the class-II aminoacyl-tRNA synthetase family. Type 1 subfamily. Homodimer.

The protein resides in the cytoplasm. The catalysed reaction is tRNA(Asp) + L-aspartate + ATP = L-aspartyl-tRNA(Asp) + AMP + diphosphate. Functionally, catalyzes the attachment of L-aspartate to tRNA(Asp) in a two-step reaction: L-aspartate is first activated by ATP to form Asp-AMP and then transferred to the acceptor end of tRNA(Asp). This chain is Aspartate--tRNA ligase, found in Porphyromonas gingivalis (strain ATCC BAA-308 / W83).